Consider the following 252-residue polypeptide: Small ribosomal subunit protein uS2 (252 aa).

The disordered stretch occupies residues 231 to 252; it reads SVESTAQEQVEETAQEETAVEA. Positions 239-252 are enriched in acidic residues; that stretch reads QVEETAQEETAVEA.

The protein belongs to the universal ribosomal protein uS2 family.

The sequence is that of Small ribosomal subunit protein uS2 from Acetivibrio thermocellus (strain ATCC 27405 / DSM 1237 / JCM 9322 / NBRC 103400 / NCIMB 10682 / NRRL B-4536 / VPI 7372) (Clostridium thermocellum).